Consider the following 143-residue polypeptide: Small ribosomal subunit protein bS6 (143 aa).

The disordered stretch occupies residues 95 to 143; it reads GPDTEQSFIMKSKDDKGDKPERRRRDDDENGDVGVSNDSDNDGGNAEAA. The span at 105–121 shows a compositional bias: basic and acidic residues; the sequence is KSKDDKGDKPERRRRDD.

This sequence belongs to the bacterial ribosomal protein bS6 family.

Its function is as follows. Binds together with bS18 to 16S ribosomal RNA. The sequence is that of Small ribosomal subunit protein bS6 from Xylella fastidiosa (strain M23).